The sequence spans 721 residues: MAYKSLNSITKSDIEALGISGDVSEKLLRDLEDIIHGSSTPPETWIQISRRILHPNLPFSFHQMMYYGCYKDFGPDLPAWIPDPKVASLTNVGKLLEKRGKEFLGGNYKNPVSSFSSFQEFSVSNPEVYWKTVLDELNILFSVPPKCILEKDTSGDNPGGKWLPGAYLNPARNCLTNGFKRRLDDIVIRWRDEGSDDLPVNTMTLLELRSQVWLAAHALSALGLEEESAIAVDMPMNVESVIIYLAIVLAGHVVVSIADSFSPREISTRLKISKAKAIFTQDVIIRGDKSIPLYRRVVDAEAPLAIVVPARGSSCRMKLREKDLSWNNFLGNARNLRGVEYVAAEKPAGAYTNILFSSGTTGEPKAIPWTNISPLKSAADAWCHLDVQRGDVVAWPTNLGWMMGPWLVYASLINGACMGLYNGSPLGPTFAKFVQDAEVSVLGVIPSIVRTWQNSNSTSGYDWSRIRCFGSTGEASNIDEYLWLMGRAHYKPVIEYCGGTEIGGSFISGSLLQPQSLAAFSTAAMGCKLFILDEDSNPIPPYAAGVGELALCPHMFGASSTLLNGNHFKVYFQGMPTFQGQILRRHGDLFERTSKGYYRAHGRADDTMNLGGIKVGSIEIERVCNSVDDSVLETAAIGVPPPSGGPEQLVIAVVFKSPEFSNPDLNLLKKSFNSEIQKKLNPLFKVSSVVTLPSLPRTATNKVMRRVLRQQLTQTGLNSKL.

A Microbody targeting signal motif is present at residues 719–721; sequence SKL.

It belongs to the ATP-dependent AMP-binding enzyme family. As to expression, expressed in leaves, stems and developing seeds.

The protein resides in the peroxisome. Its function is as follows. May act as an acid--thiol ligase that activates carboxylic acids by forming acyl-CoAs. The sequence is that of Probable acyl-activating enzyme 17, peroxisomal (AAE17) from Arabidopsis thaliana (Mouse-ear cress).